The primary structure comprises 943 residues: Isoleucine--tRNA ligase (943 aa).

A 'HIGH' region motif is present at residues 58–68 (PYANGTIHIGH). An L-isoleucyl-5'-AMP-binding site is contributed by E567. The 'KMSKS' region signature appears at 608–612 (KMSKS). ATP is bound at residue K611. 4 residues coordinate Zn(2+): C906, C909, C926, and C929.

Belongs to the class-I aminoacyl-tRNA synthetase family. IleS type 1 subfamily. As to quaternary structure, monomer. Zn(2+) serves as cofactor.

The protein resides in the cytoplasm. It catalyses the reaction tRNA(Ile) + L-isoleucine + ATP = L-isoleucyl-tRNA(Ile) + AMP + diphosphate. In terms of biological role, catalyzes the attachment of isoleucine to tRNA(Ile). As IleRS can inadvertently accommodate and process structurally similar amino acids such as valine, to avoid such errors it has two additional distinct tRNA(Ile)-dependent editing activities. One activity is designated as 'pretransfer' editing and involves the hydrolysis of activated Val-AMP. The other activity is designated 'posttransfer' editing and involves deacylation of mischarged Val-tRNA(Ile). This chain is Isoleucine--tRNA ligase, found in Pseudomonas fluorescens (strain SBW25).